Reading from the N-terminus, the 910-residue chain is SWI/SNF-related matrix-associated actin-dependent regulator of chromatin subfamily A-like protein 1 (910 aa).

A disordered region spans residues 1–170 (MSLPLTEEQR…GRPSTSGQSI (170 aa)). Ser-2 is modified (N-acetylserine). Mediates interaction with RPA2 stretches follow at residues 2 to 30 (SLPLTEEQRKKIEENRQKALARRAEKLWA) and 5 to 30 (LTEEQRKKIEENRQKALARRAEKLWA). Positions 3–28 (LPLTEEQRKKIEENRQKALARRAEKL) form a coiled coil. Over residues 7 to 29 (EEQRKKIEENRQKALARRAEKLW) the composition is skewed to basic and acidic residues. 2 stretches are compositionally biased toward polar residues: residues 32–54 (QPQSTASGSSAARPSQCKQNSLL) and 70–95 (SKGQNLNNSLPAAQRPHSSPCFQPST). The span at 97 to 107 (EEAKGLWKSEG) shows a compositional bias: basic and acidic residues. Position 117 is a phosphoserine (Ser-117). A compositionally biased stretch (polar residues) spans 120–131 (EVSNQQLLGSKS). Over residues 150 to 160 (FPRDPKLEAKA) the composition is skewed to basic and acidic residues. Ser-164 is modified (phosphoserine). HARP domains lie at 198–268 (KASC…QPLE) and 284–355 (SLTF…DPLP). In terms of domain architecture, Helicase ATP-binding spans 402–557 (SFAISKRGRL…YTQIIAVKPT (156 aa)). 415 to 422 (DDMGLGKT) is an ATP binding site. Residues 506–509 (DESH) carry the DESH box motif. The short motif at 601–618 (RRLKSDVLSQLPAKQRKM) is the Nuclear localization signal element. The region spanning 672-825 (YILDLLESGR…ETNFSEMTEA (154 aa)) is the Helicase C-terminal domain. Positions 865-875 (GSTSGTSGNSS) are enriched in low complexity. Residues 865 to 890 (GSTSGTSGNSSQELGDITDENALADS) are disordered.

Belongs to the SNF2/RAD54 helicase family. SMARCAL1 subfamily. In terms of assembly, interacts with RPA2; the interaction is direct and mediates the recruitment by the RPA complex of SMARCAL1 to sites of DNA damage. Post-translationally, DNA damage-regulated phosphorylation by kinases that may include ATM, ATR and PRKDC.

It is found in the nucleus. The catalysed reaction is ATP + H2O = ADP + phosphate + H(+). Its function is as follows. ATP-dependent annealing helicase that binds selectively to fork DNA relative to ssDNA or dsDNA and catalyzes the rewinding of the stably unwound DNA. Rewinds single-stranded DNA bubbles that are stably bound by replication protein A (RPA). Acts throughout the genome to reanneal stably unwound DNA, performing the opposite reaction of many enzymes, such as helicases and polymerases, that unwind DNA. May play an important role in DNA damage response by acting at stalled replication forks. This is SWI/SNF-related matrix-associated actin-dependent regulator of chromatin subfamily A-like protein 1 (Smarcal1) from Rattus norvegicus (Rat).